The primary structure comprises 181 residues: MPLLNTLATPYADALLQVGESRKQSDALADEAKALLSAWSSSQDLQDAMRSPVLSVEGKKKALDSLFSESISPAMLNLLKLLADRQRIGMLDAVLERFLELYRELRGITLAYVTSATALSEQQQDKLTEKVKTVAGTTAVDIDLSVDPDLIGGFVVRLGSQVIDASLRGQVRQLGLSLARA.

The protein belongs to the ATPase delta chain family. F-type ATPases have 2 components, F(1) - the catalytic core - and F(0) - the membrane proton channel. F(1) has five subunits: alpha(3), beta(3), gamma(1), delta(1), epsilon(1). CF(0) has four main subunits: a(1), b(1), b'(1) and c(10-14). The alpha and beta chains form an alternating ring which encloses part of the gamma chain. F(1) is attached to F(0) by a central stalk formed by the gamma and epsilon chains, while a peripheral stalk is formed by the delta, b and b' chains.

Its subcellular location is the cellular thylakoid membrane. F(1)F(0) ATP synthase produces ATP from ADP in the presence of a proton or sodium gradient. F-type ATPases consist of two structural domains, F(1) containing the extramembraneous catalytic core and F(0) containing the membrane proton channel, linked together by a central stalk and a peripheral stalk. During catalysis, ATP synthesis in the catalytic domain of F(1) is coupled via a rotary mechanism of the central stalk subunits to proton translocation. Functionally, this protein is part of the stalk that links CF(0) to CF(1). It either transmits conformational changes from CF(0) to CF(1) or is implicated in proton conduction. This Synechococcus sp. (strain RCC307) protein is ATP synthase subunit delta.